We begin with the raw amino-acid sequence, 503 residues long: Probable cytosol aminopeptidase (503 aa).

Positions 274 and 279 each coordinate Mn(2+). K286 is a catalytic residue. Mn(2+)-binding residues include D297, D356, and E358. Residue R360 is part of the active site.

It belongs to the peptidase M17 family. The cofactor is Mn(2+).

The protein resides in the cytoplasm. The enzyme catalyses Release of an N-terminal amino acid, Xaa-|-Yaa-, in which Xaa is preferably Leu, but may be other amino acids including Pro although not Arg or Lys, and Yaa may be Pro. Amino acid amides and methyl esters are also readily hydrolyzed, but rates on arylamides are exceedingly low.. The catalysed reaction is Release of an N-terminal amino acid, preferentially leucine, but not glutamic or aspartic acids.. Its function is as follows. Presumably involved in the processing and regular turnover of intracellular proteins. Catalyzes the removal of unsubstituted N-terminal amino acids from various peptides. The chain is Probable cytosol aminopeptidase from Burkholderia pseudomallei (strain 1106a).